A 428-amino-acid polypeptide reads, in one-letter code: Enolase (428 aa).

Position 162 (Q162) interacts with (2R)-2-phosphoglycerate. E204 acts as the Proton donor in catalysis. Residues D241, E283, and D310 each coordinate Mg(2+). (2R)-2-phosphoglycerate contacts are provided by K335, R364, S365, and K386. The active-site Proton acceptor is the K335.

This sequence belongs to the enolase family. It depends on Mg(2+) as a cofactor.

Its subcellular location is the cytoplasm. The protein localises to the secreted. It is found in the cell surface. The catalysed reaction is (2R)-2-phosphoglycerate = phosphoenolpyruvate + H2O. Its pathway is carbohydrate degradation; glycolysis; pyruvate from D-glyceraldehyde 3-phosphate: step 4/5. Catalyzes the reversible conversion of 2-phosphoglycerate (2-PG) into phosphoenolpyruvate (PEP). It is essential for the degradation of carbohydrates via glycolysis. The polypeptide is Enolase (Nocardia farcinica (strain IFM 10152)).